A 261-amino-acid polypeptide reads, in one-letter code: U11/U12 small nuclear ribonucleoprotein 31 kDa protein (261 aa).

The disordered stretch occupies residues 18–51; sequence YYRYSSVAAPPPSNPKHQPSSSAKSSAPGGGSGG. Positions 57-135 constitute an RRM domain; the sequence is STLYVSNLDF…RKLTVSIAAD (79 aa). A CCHC-type zinc finger spans residues 153–169; sequence RCYECGDEGHLSYECPK. Positions 165–261 are disordered; that stretch reads YECPKNQLGP…YFSDESDDED (97 aa). Residues 226–235 show a composition bias toward basic and acidic residues; it reads AGERLRKREA.

Component of the U11/U12 snRNPs that are part of the U12-type spliceosome. In terms of tissue distribution, ubiquitous. Abundantly expressed in the shoot apical neristem.

It localises to the nucleus. RNA chaperone required for proper U12 intron splicing and for normal growth and development of plants. Mainly responsible for meristem activity. Plays a role in regulating cell division. In Arabidopsis thaliana (Mouse-ear cress), this protein is U11/U12 small nuclear ribonucleoprotein 31 kDa protein (SNRNP31).